We begin with the raw amino-acid sequence, 751 residues long: Catalase-peroxidase (751 aa).

Residues 1-21 form a disordered region; that stretch reads MSNESKCPFHQTAGGGTTNRD. Positions 90 to 244 form a cross-link, tryptophyl-tyrosyl-methioninium (Trp-Tyr) (with M-270); that stretch reads WHSAGTYRIG…LAAVQMGLIY (155 aa). H91 serves as the catalytic Proton acceptor. The interval 195-227 is disordered; that stretch reads YGKDQVKAQPPGQGDLVAEPAKHGEEQNRDLSA. Residues 214 to 227 show a composition bias toward basic and acidic residues; sequence PAKHGEEQNRDLSA. The segment at residues 244 to 270 is a cross-link (tryptophyl-tyrosyl-methioninium (Tyr-Met) (with W-90)); that stretch reads YVNPEGPEGNPDPVASGKDIRETFGRM. H285 is a binding site for heme b. Positions 364–385 are disordered; it reads GAHQWRPKDGKGAGTVPDAHDP.

It belongs to the peroxidase family. Peroxidase/catalase subfamily. Homodimer or homotetramer. Requires heme b as cofactor. In terms of processing, formation of the three residue Trp-Tyr-Met cross-link is important for the catalase, but not the peroxidase activity of the enzyme.

The enzyme catalyses H2O2 + AH2 = A + 2 H2O. It catalyses the reaction 2 H2O2 = O2 + 2 H2O. Bifunctional enzyme with both catalase and broad-spectrum peroxidase activity. In Pseudomonas putida (strain ATCC 47054 / DSM 6125 / CFBP 8728 / NCIMB 11950 / KT2440), this protein is Catalase-peroxidase.